Consider the following 472-residue polypeptide: Alanine--anticapsin ligase (472 aa).

Position 109 (glutamate 109) interacts with Mg(2+). ATP is bound by residues lysine 138 and lysine 178. Residues 142–355 (RAAFNRAGVK…MAQLLLDVLC (214 aa)) enclose the ATP-grasp domain. Position 182 (leucine 182) interacts with Mg(2+). ATP contacts are provided by residues 184–185 (SS), 226–229 (EEFL), and glutamine 268. Residues glutamate 273 and 309 to 311 (HTE) contribute to the substrate site. Residues glutamate 311 and glutamate 324 each coordinate Mg(2+). Position 328-331 (328-331 (RFAG)) interacts with substrate.

As to quaternary structure, monomer or homodimer. It depends on Mg(2+) as a cofactor.

It carries out the reaction L-anticapsin + L-alanine + ATP = bacilysin + ADP + phosphate + H(+). Its pathway is antibiotic biosynthesis; bacilysin biosynthesis. Functionally, part of the bacABCDEFG operon responsible for the biosynthesis of bacilysin, an irreversible inactivator of the glutaminase domain of glucosamine synthetase. Catalyzes the formation of alpha-dipeptides from various L-amino acids in the presence of ATP. In vivo catalyzes the ligation of L-alanine and L-anticapsin (epoxycyclohexanonyl-Ala) to produce the final bacilysin antibiotic (L-Ala-L-4S-cyclohexenonyl-Ala dipeptide). The polypeptide is Alanine--anticapsin ligase (Bacillus subtilis).